A 198-amino-acid chain; its full sequence is Glycerol-3-phosphate acyltransferase (198 aa).

The next 5 membrane-spanning stretches (helical) occupy residues 1 to 21 (MILI…IPAA), 52 to 72 (GPAL…VGLA), 81 to 101 (WTAL…FLGF), 115 to 135 (LALD…CIWL), and 153 to 173 (LAAA…LAAL).

It belongs to the PlsY family. Probably interacts with PlsX.

Its subcellular location is the cell membrane. The catalysed reaction is an acyl phosphate + sn-glycerol 3-phosphate = a 1-acyl-sn-glycero-3-phosphate + phosphate. It functions in the pathway lipid metabolism; phospholipid metabolism. Catalyzes the transfer of an acyl group from acyl-phosphate (acyl-PO(4)) to glycerol-3-phosphate (G3P) to form lysophosphatidic acid (LPA). This enzyme utilizes acyl-phosphate as fatty acyl donor, but not acyl-CoA or acyl-ACP. The polypeptide is Glycerol-3-phosphate acyltransferase (Deinococcus geothermalis (strain DSM 11300 / CIP 105573 / AG-3a)).